The sequence spans 217 residues: Small ribosomal subunit protein uS3 (217 aa).

In terms of domain architecture, KH type-2 spans 40 to 110 (IRELVNKSFT…EVYINIHEVR (71 aa)).

This sequence belongs to the universal ribosomal protein uS3 family. As to quaternary structure, part of the 30S ribosomal subunit. Forms a tight complex with proteins S10 and S14.

Its function is as follows. Binds the lower part of the 30S subunit head. Binds mRNA in the 70S ribosome, positioning it for translation. The polypeptide is Small ribosomal subunit protein uS3 (Rickettsia bellii (strain OSU 85-389)).